Here is a 174-residue protein sequence, read N- to C-terminus: Regenerating islet-derived protein 3-gamma (174 aa).

The N-terminal stretch at 1 to 26 (MLPRVALTTMSWMLLSSLMLLSQVQG) is a signal peptide. Residues 27–37 (EDAKEDVPTSR) constitute a propeptide that is removed on maturation. 3 disulfides stabilise this stretch: cysteine 40–cysteine 51, cysteine 68–cysteine 170, and cysteine 145–cysteine 162. Residues 47–171 (YGSYCYALFS…CISELPYVCK (125 aa)) form the C-type lectin domain. Residues 103–118 (WIGLHDPTLGQEPNRG) form a sufficient to activate EXTL3 region. Histidine 107 lines the Zn(2+) pocket. Positions 114 to 116 (EPN) match the EPN motif. Zn(2+)-binding residues include glutamate 121 and histidine 144.

As to quaternary structure, forms a hexameric membrane-permeabilizing oligomeric pore on membrane phospholipids. The hexamer is formed by three dimers related by helical symmetry. Forms filaments, filamentation traps pore complexes and limits damage to host cells. Interacts with EXTL3. Proteolytic processing by trypsin removes an inhibitory N-terminal propeptide and is essential for peptidoglycan binding and antibacterial activity. Expressed in injured skeletal muscles and sciatic nerve (at protein level). Expressed in the pancreas. Expression increases during the acute phase of pancreatitis.

It is found in the secreted. The protein resides in the cytoplasm. Its activity is regulated as follows. Lipopolysaccharide inhibits pore-forming activity, explaining why is bactericidal for Gram-positive but not Gram-negative bacteria. Bactericidal C-type lectin which acts exclusively against Gram-positive bacteria and mediates bacterial killing by binding to surface-exposed carbohydrate moieties of peptidoglycan. Restricts bacterial colonization of the intestinal epithelial surface and consequently limits activation of adaptive immune responses by the microbiota. Functionally, acts as a hormone in response to different stimuli like anti-inflammatory signals, such as IL17A, or gut microbiome. Is secreted by different cell types to activate its receptor EXTL3 and induce cell specific signaling pathways. Induced by IL17A in keratinocytes, regulates keratinocyte proliferation and differentiation after skin injury. In parallel, inhibits skin inflammation through the inhibition of inflammatory cytokines such as IL6 and TNF. Induced by IL22 in lung epithelial cells, inhibits cytokine production and regulates allergic airway inflammation. Induced in small intestine by inulin-enriched diet and Lactobacillus gasseri enriched microbiome, plays a role in the improvement of gut barrier function, the regulation of energy balance and glucose levels. Modulates microbiota composition in duodenal contents. Produced by nociceptor in response to endotoxins, prevents endotoxic death by targeting kynurenine pathway in microglia. In terms of biological role, has bacteriostatic activity. Its function is as follows. Has bactericidal activity against L.monocytogenes and methicillin-resistant S.aureus. The sequence is that of Regenerating islet-derived protein 3-gamma from Rattus norvegicus (Rat).